A 287-amino-acid chain; its full sequence is MFARLPLYLRLVRMDKPIGSLLLLWPTLNALWIASDGHPTWPLLVIFTVGTVLMRSAGCAINDYADRDFDRYVKRTENRPITSGKIKAWEAVALAAALSLLAFLLILPLNTLTKELSVAALFVAGSYPFTKRFFAIPQAYLGIAFGFGIPMAFAAIQGHVPLLAWVMLLANVFWSVAYDTEYAMVDRDDDIKIGIRTSALTFGRFDVAAIMICYAATLGIYVGIGVLLGFGVLYWLGWAAAAGCAIYHYTLIRNRERMACFAAFRHNNWLGGALFVGIAAHYAAGSF.

The next 6 helical transmembrane spans lie at 30–50, 89–109, 133–153, 158–178, 199–221, and 267–287; these read ALWIASDGHPTWPLLVIFTVG, WEAVALAAALSLLAFLLILPL, FFAIPQAYLGIAFGFGIPMAF, GHVPLLAWVMLLANVFWSVAY, ALTFGRFDVAAIMICYAATLGIY, and NNWLGGALFVGIAAHYAAGSF.

It belongs to the UbiA prenyltransferase family. Mg(2+) serves as cofactor.

Its subcellular location is the cell inner membrane. It carries out the reaction all-trans-octaprenyl diphosphate + 4-hydroxybenzoate = 4-hydroxy-3-(all-trans-octaprenyl)benzoate + diphosphate. It participates in cofactor biosynthesis; ubiquinone biosynthesis. In terms of biological role, catalyzes the prenylation of para-hydroxybenzoate (PHB) with an all-trans polyprenyl group. Mediates the second step in the final reaction sequence of ubiquinone-8 (UQ-8) biosynthesis, which is the condensation of the polyisoprenoid side chain with PHB, generating the first membrane-bound Q intermediate 3-octaprenyl-4-hydroxybenzoate. This is 4-hydroxybenzoate octaprenyltransferase from Paraburkholderia phytofirmans (strain DSM 17436 / LMG 22146 / PsJN) (Burkholderia phytofirmans).